Consider the following 503-residue polypeptide: Probable cytosol aminopeptidase (503 aa).

The Mn(2+) site is built by K271 and D276. K283 is a catalytic residue. Residues D294, D353, and E355 each contribute to the Mn(2+) site. R357 is a catalytic residue.

This sequence belongs to the peptidase M17 family. It depends on Mn(2+) as a cofactor.

The protein resides in the cytoplasm. The enzyme catalyses Release of an N-terminal amino acid, Xaa-|-Yaa-, in which Xaa is preferably Leu, but may be other amino acids including Pro although not Arg or Lys, and Yaa may be Pro. Amino acid amides and methyl esters are also readily hydrolyzed, but rates on arylamides are exceedingly low.. The catalysed reaction is Release of an N-terminal amino acid, preferentially leucine, but not glutamic or aspartic acids.. Presumably involved in the processing and regular turnover of intracellular proteins. Catalyzes the removal of unsubstituted N-terminal amino acids from various peptides. This is Probable cytosol aminopeptidase from Chlorobaculum parvum (strain DSM 263 / NCIMB 8327) (Chlorobium vibrioforme subsp. thiosulfatophilum).